The chain runs to 219 residues: Protein-L-isoaspartate O-methyltransferase 2 (219 aa).

Ser60 is a catalytic residue.

This sequence belongs to the methyltransferase superfamily. L-isoaspartyl/D-aspartyl protein methyltransferase family.

It is found in the cytoplasm. It catalyses the reaction [protein]-L-isoaspartate + S-adenosyl-L-methionine = [protein]-L-isoaspartate alpha-methyl ester + S-adenosyl-L-homocysteine. In terms of biological role, catalyzes the methyl esterification of L-isoaspartyl residues in peptides and proteins that result from spontaneous decomposition of normal L-aspartyl and L-asparaginyl residues. It plays a role in the repair and/or degradation of damaged proteins. This Archaeoglobus fulgidus (strain ATCC 49558 / DSM 4304 / JCM 9628 / NBRC 100126 / VC-16) protein is Protein-L-isoaspartate O-methyltransferase 2 (pcm2).